We begin with the raw amino-acid sequence, 362 residues long: MIGGLEHLARRGLFLFDPEAAHGLSITALKTGLVPSCAAPADPRLQQSVAGLAFPNPVGMAAGYDKNAEVPEALLKIGFGFTEIGTVTPRPQPGNDKPRLFRLIEDEAVINRLGFNNEGHGAALARLKACSREALIGVNIGANKDSADRIADYVTGIRTFYAVARYFTANISSPNTPGLRDLQARESLATLLSAVLAAREDEAGKCGRRVPVFLKIAPDLTEEGMDDIAAEVLAQGLDGLIVSNTTLARARLRDRKQASEVGGLSGKPLFEKSTAVLARMRRRVGPDLPIIGVGGVSSAETAAEKIRAGADLVQLYSCMVYEGPSLPGRIVRGLSALCDREKLASIREIRDSRVDYWTGMNV.

FMN contacts are provided by residues 62–66 and threonine 86; that span reads AGYDK. Lysine 66 provides a ligand contact to substrate. 111–115 lines the substrate pocket; sequence NRLGF. Residues asparagine 139 and asparagine 170 each contribute to the FMN site. Asparagine 170 provides a ligand contact to substrate. The active-site Nucleophile is the serine 173. Substrate is bound at residue asparagine 175. 2 residues coordinate FMN: lysine 215 and serine 243. Substrate is bound at residue 244-245; that stretch reads NT. FMN-binding positions include glycine 266, glycine 295, and 316–317; that span reads YS.

It belongs to the dihydroorotate dehydrogenase family. Type 2 subfamily. Monomer. FMN serves as cofactor.

The protein resides in the cell membrane. The enzyme catalyses (S)-dihydroorotate + a quinone = orotate + a quinol. The protein operates within pyrimidine metabolism; UMP biosynthesis via de novo pathway; orotate from (S)-dihydroorotate (quinone route): step 1/1. Functionally, catalyzes the conversion of dihydroorotate to orotate with quinone as electron acceptor. The polypeptide is Dihydroorotate dehydrogenase (quinone) (Sinorhizobium medicae (strain WSM419) (Ensifer medicae)).